The primary structure comprises 444 residues: MAKKYFGTDGVRGEVGQFPITPDFVLKLGYAAGQVLVQHDTDQKPTVLIGKDTRISGYMLEAALVAGFTAAGVNVIQTGPLPTPGVAYLTRALRLSAGVMISASHNAYSDNGIKFFAEGGVKLSDEIELEIEAKIDEEMKTQPSARLGRARRISGADDRYIEFCKSTFPTHSDLRGLKLVVDAANGAAYSVAPKVFHELGAQVVSIGDEPDGYNINEKCGATHTKTLQAAVLQNEADYGIALDGDGDRLMMVDKNGKVYDGDSLIYVIAKARAREGINIGGVVGTVMTNMAMEIALKEQGVDFCRAKVGDRYVLEQLNQRSWLIGGEASGHILCMDKHNTGDGIISALQVLAALQTLNQDLATVCADWQPYPQTMINVRIQKGQKWQEASKDVLAEVEKELEGKGRVVLRASGTEPVVRVMVEARQADWARDGAERIASAIGSL.

Catalysis depends on S104, which acts as the Phosphoserine intermediate. The Mg(2+) site is built by S104, D243, D245, and D247. The residue at position 104 (S104) is a Phosphoserine.

It belongs to the phosphohexose mutase family. Mg(2+) serves as cofactor. Post-translationally, activated by phosphorylation.

It catalyses the reaction alpha-D-glucosamine 1-phosphate = D-glucosamine 6-phosphate. In terms of biological role, catalyzes the conversion of glucosamine-6-phosphate to glucosamine-1-phosphate. The polypeptide is Phosphoglucosamine mutase (Neisseria meningitidis serogroup C (strain 053442)).